The chain runs to 286 residues: ATP synthase gamma chain (286 aa).

The protein belongs to the ATPase gamma chain family. F-type ATPases have 2 components, CF(1) - the catalytic core - and CF(0) - the membrane proton channel. CF(1) has five subunits: alpha(3), beta(3), gamma(1), delta(1), epsilon(1). CF(0) has three main subunits: a, b and c.

The protein resides in the cell inner membrane. Its function is as follows. Produces ATP from ADP in the presence of a proton gradient across the membrane. The gamma chain is believed to be important in regulating ATPase activity and the flow of protons through the CF(0) complex. This chain is ATP synthase gamma chain, found in Pseudomonas fluorescens (strain SBW25).